Consider the following 510-residue polypeptide: Peptide transporter imqJ (510 aa).

3 helical membrane-spanning segments follow: residues 1–21 (MVNQ…AVVA), 31–51 (IIFS…SSLP), and 57–77 (GISL…TGGI). The N-linked (GlcNAc...) asparagine glycan is linked to Asn80. The next 4 helical transmembrane spans lie at 116 to 136 (IFTT…LITI), 143 to 163 (FSAA…IVLV), 231 to 251 (IFIL…NFIS), and 269 to 289 (IDPI…FPFL). The region spanning 348–468 (PAASEIRLLY…RCSSVFFFKA (121 aa)) is the Fe2OG dioxygenase domain. Fe cation contacts are provided by His377 and Asp379. Asn421 carries N-linked (GlcNAc...) asparagine glycosylation. A Fe cation-binding site is contributed by His439. Arg459 contributes to the 2-oxoglutarate binding site.

Belongs to the major facilitator superfamily. Proton-dependent oligopeptide transporter (POT/PTR) (TC 2.A.17) family.

The protein resides in the membrane. Functionally, peptide transporter; part of the gene cluster that mediates the biosynthesis of imizoquins A to D, tripeptide-derived alkaloids that serve a protective role against oxidative stress that are essential for normal germination. The chain is Peptide transporter imqJ from Aspergillus flavus (strain ATCC 200026 / FGSC A1120 / IAM 13836 / NRRL 3357 / JCM 12722 / SRRC 167).